Consider the following 464-residue polypeptide: ATP synthase subunit beta (464 aa).

152–159 (GGAGVGKT) is a binding site for ATP.

The protein belongs to the ATPase alpha/beta chains family. In terms of assembly, F-type ATPases have 2 components, CF(1) - the catalytic core - and CF(0) - the membrane proton channel. CF(1) has five subunits: alpha(3), beta(3), gamma(1), delta(1), epsilon(1). CF(0) has three main subunits: a(1), b(2) and c(9-12). The alpha and beta chains form an alternating ring which encloses part of the gamma chain. CF(1) is attached to CF(0) by a central stalk formed by the gamma and epsilon chains, while a peripheral stalk is formed by the delta and b chains.

It localises to the cell membrane. It catalyses the reaction ATP + H2O + 4 H(+)(in) = ADP + phosphate + 5 H(+)(out). In terms of biological role, produces ATP from ADP in the presence of a proton gradient across the membrane. The catalytic sites are hosted primarily by the beta subunits. The sequence is that of ATP synthase subunit beta from Ureaplasma urealyticum serovar 10 (strain ATCC 33699 / Western).